The sequence spans 486 residues: tRNA sulfurtransferase (486 aa).

Residues alanine 61 to arginine 165 enclose the THUMP domain. Residues leucine 183–isoleucine 184, lysine 265, glycine 287, and glutamine 296 contribute to the ATP site. Cysteine 344 and cysteine 456 are disulfide-bonded. Residues leucine 404–alanine 481 enclose the Rhodanese domain. Residue cysteine 456 is the Cysteine persulfide intermediate of the active site.

This sequence belongs to the ThiI family.

The protein resides in the cytoplasm. It carries out the reaction [ThiI sulfur-carrier protein]-S-sulfanyl-L-cysteine + a uridine in tRNA + 2 reduced [2Fe-2S]-[ferredoxin] + ATP + H(+) = [ThiI sulfur-carrier protein]-L-cysteine + a 4-thiouridine in tRNA + 2 oxidized [2Fe-2S]-[ferredoxin] + AMP + diphosphate. It catalyses the reaction [ThiS sulfur-carrier protein]-C-terminal Gly-Gly-AMP + S-sulfanyl-L-cysteinyl-[cysteine desulfurase] + AH2 = [ThiS sulfur-carrier protein]-C-terminal-Gly-aminoethanethioate + L-cysteinyl-[cysteine desulfurase] + A + AMP + 2 H(+). It functions in the pathway cofactor biosynthesis; thiamine diphosphate biosynthesis. Its function is as follows. Catalyzes the ATP-dependent transfer of a sulfur to tRNA to produce 4-thiouridine in position 8 of tRNAs, which functions as a near-UV photosensor. Also catalyzes the transfer of sulfur to the sulfur carrier protein ThiS, forming ThiS-thiocarboxylate. This is a step in the synthesis of thiazole, in the thiamine biosynthesis pathway. The sulfur is donated as persulfide by IscS. The polypeptide is tRNA sulfurtransferase (Mannheimia succiniciproducens (strain KCTC 0769BP / MBEL55E)).